The primary structure comprises 153 residues: Mitochondrial fission 1 protein (153 aa).

Topologically, residues 1–124 are cytoplasmic; sequence MTQLPYAVDA…LIDDKVTKEG (124 aa). The TPR repeat unit spans residues 73–106; that stretch reads RECLYYLALGNYKLGNYAQARKYNDALLENEPAN. The helical transmembrane segment at 125-145 threads the bilayer; the sequence is LMGVAIISGVAVAAGVIGGVL. The Mitochondrial intermembrane segment spans residues 146-153; the sequence is LRNLGRKR.

The protein belongs to the FIS1 family.

It localises to the mitochondrion outer membrane. Functionally, has a role in mitochondrial fission. Has a role in outer membrane fission but not matrix separation. The protein is Mitochondrial fission 1 protein (mtp-2) of Neurospora crassa (strain ATCC 24698 / 74-OR23-1A / CBS 708.71 / DSM 1257 / FGSC 987).